The sequence spans 312 residues: Malate dehydrogenase (312 aa).

Residues 7-13 (GAAGGIG) and aspartate 34 each bind NAD(+). Residues arginine 81 and arginine 87 each contribute to the substrate site. Residues asparagine 94 and 117 to 119 (ITN) contribute to the NAD(+) site. Substrate contacts are provided by asparagine 119 and arginine 153. Histidine 177 functions as the Proton acceptor in the catalytic mechanism. Position 227 (methionine 227) interacts with NAD(+).

The protein belongs to the LDH/MDH superfamily. MDH type 1 family. Homodimer.

It carries out the reaction (S)-malate + NAD(+) = oxaloacetate + NADH + H(+). Catalyzes the reversible oxidation of malate to oxaloacetate. This Serratia proteamaculans (strain 568) protein is Malate dehydrogenase.